The chain runs to 241 residues: Uridylate kinase (241 aa).

15–18 (KLSG) is an ATP binding site. The involved in allosteric activation by GTP stretch occupies residues 23–28 (GAEGFG). A UMP-binding site is contributed by glycine 57. Glycine 58 and arginine 62 together coordinate ATP. UMP contacts are provided by residues aspartate 77 and 138–145 (TGNPFFTT). Threonine 165, tyrosine 171, and aspartate 174 together coordinate ATP.

Belongs to the UMP kinase family. Homohexamer.

Its subcellular location is the cytoplasm. It carries out the reaction UMP + ATP = UDP + ADP. It functions in the pathway pyrimidine metabolism; CTP biosynthesis via de novo pathway; UDP from UMP (UMPK route): step 1/1. Its activity is regulated as follows. Allosterically activated by GTP. Inhibited by UTP. Functionally, catalyzes the reversible phosphorylation of UMP to UDP. The polypeptide is Uridylate kinase (Serratia proteamaculans (strain 568)).